Here is a 727-residue protein sequence, read N- to C-terminus: Elongation factor 2 (727 aa).

One can recognise a tr-type G domain in the interval 19-260 (DQIRNIGICA…MVVTHLPNPV (242 aa)). GTP-binding positions include 28–35 (AHIDHGKT), 94–98 (DTPGH), and 148–151 (NKVD). A Diphthamide modification is found at His-603.

It belongs to the TRAFAC class translation factor GTPase superfamily. Classic translation factor GTPase family. EF-G/EF-2 subfamily.

The protein localises to the cytoplasm. Functionally, catalyzes the GTP-dependent ribosomal translocation step during translation elongation. During this step, the ribosome changes from the pre-translocational (PRE) to the post-translocational (POST) state as the newly formed A-site-bound peptidyl-tRNA and P-site-bound deacylated tRNA move to the P and E sites, respectively. Catalyzes the coordinated movement of the two tRNA molecules, the mRNA and conformational changes in the ribosome. The chain is Elongation factor 2 from Methanococcus aeolicus (strain ATCC BAA-1280 / DSM 17508 / OCM 812 / Nankai-3).